The sequence spans 241 residues: tRNA pseudouridine synthase B (241 aa).

Catalysis depends on D45, which acts as the Nucleophile.

The protein belongs to the pseudouridine synthase TruB family. Type 1 subfamily.

The enzyme catalyses uridine(55) in tRNA = pseudouridine(55) in tRNA. Its function is as follows. Responsible for synthesis of pseudouridine from uracil-55 in the psi GC loop of transfer RNAs. In Opitutus terrae (strain DSM 11246 / JCM 15787 / PB90-1), this protein is tRNA pseudouridine synthase B.